Reading from the N-terminus, the 53-residue chain is ATP synthase F(0) complex subunit 8 (53 aa).

The helical transmembrane segment at 8–24 (PWLTTFLIVWISLIVIL) threads the bilayer.

It belongs to the ATPase protein 8 family. In terms of assembly, component of the ATP synthase complex composed at least of ATP5F1A/subunit alpha, ATP5F1B/subunit beta, ATP5MC1/subunit c (homooctomer), MT-ATP6/subunit a, MT-ATP8/subunit 8, ATP5ME/subunit e, ATP5MF/subunit f, ATP5MG/subunit g, ATP5MK/subunit k, ATP5MJ/subunit j, ATP5F1C/subunit gamma, ATP5F1D/subunit delta, ATP5F1E/subunit epsilon, ATP5PF/subunit F6, ATP5PB/subunit b, ATP5PD/subunit d, ATP5PO/subunit OSCP. ATP synthase complex consists of a soluble F(1) head domain (subunits alpha(3) and beta(3)) - the catalytic core - and a membrane F(0) domain - the membrane proton channel (subunits c, a, 8, e, f, g, k and j). These two domains are linked by a central stalk (subunits gamma, delta, and epsilon) rotating inside the F1 region and a stationary peripheral stalk (subunits F6, b, d, and OSCP).

The protein localises to the mitochondrion membrane. Its function is as follows. Subunit 8, of the mitochondrial membrane ATP synthase complex (F(1)F(0) ATP synthase or Complex V) that produces ATP from ADP in the presence of a proton gradient across the membrane which is generated by electron transport complexes of the respiratory chain. ATP synthase complex consist of a soluble F(1) head domain - the catalytic core - and a membrane F(1) domain - the membrane proton channel. These two domains are linked by a central stalk rotating inside the F(1) region and a stationary peripheral stalk. During catalysis, ATP synthesis in the catalytic domain of F(1) is coupled via a rotary mechanism of the central stalk subunits to proton translocation. In vivo, can only synthesize ATP although its ATP hydrolase activity can be activated artificially in vitro. Part of the complex F(0) domain. This Alligator mississippiensis (American alligator) protein is ATP synthase F(0) complex subunit 8.